Consider the following 630-residue polypeptide: Amino acid transporter heavy chain SLC3A2 (630 aa).

M1 carries the N-acetylmethionine modification. E2 bears the N-acetylserine mark. E2 carries the phosphoserine modification. A disordered region spans residues I15–L39. The Cytoplasmic portion of the chain corresponds to M102–A184. At S103 the chain carries Phosphoserine. Phosphothreonine is present on T106. S134 carries the post-translational modification Phosphoserine. Residue K147 forms a Glycyl lysine isopeptide (Lys-Gly) (interchain with G-Cter in ubiquitin) linkage. The residue at position 165 (S165) is a Phosphoserine. K166 is covalently cross-linked (Glycyl lysine isopeptide (Lys-Gly) (interchain with G-Cter in SUMO2)). Residues L185–V205 traverse the membrane as a helical; Signal-anchor for type II membrane protein segment. Residues R206–A630 lie on the Extracellular side of the membrane. N-linked (GlcNAc...) asparagine glycans are attached at residues N365 and N381. Residues S406, S408, and S410 each carry the phosphoserine modification. N424 is a glycosylation site (N-linked (GlcNAc...) (complex) asparagine). N-linked (GlcNAc...) asparagine glycosylation is present at N506. S527 and S531 each carry phosphoserine.

Disulfide-linked heterodimer with a non-glycosylated catalytic light subunit (SLC7A5, SLC7A6, SLC7A7, SLC7A8, SLC7A10 or SLC7A11). Interacts with TLCD3A/CT120. Interacts with ICAM1. Constitutively and specifically associates with beta-1 integrins (alpha-2/beta-1, alpha-3/beta-1, alpha-5/beta-1 and alpha-6/beta-1), but minimally with alpha-4/beta-1. Interacts with LAPTM4B; recruits SLC3A2 and SLC7A5/LAT1 to lysosomes to promote leucine uptake into these organelles and is required for mTORC1 activation. In terms of assembly, (Microbial infection) Interacts with hepatitis C virus/HCV envelope glycoprotein E2; the interaction may facilitate viral entry into host cell. N-glycosylated; N-glycosylation is crucial for trafficking and stability of SLC3A2 to the plasma membrane. Post-translationally, phosphorylation on Ser-406; Ser-408 or Ser-410 and on Ser-527 or Ser-531 by ecto-protein kinases favors heterotypic cell-cell interactions. As to expression, expressed ubiquitously in all tissues tested with highest levels detected in kidney, placenta and testis and weakest level in thymus. During gestation, expression in the placenta was significantly stronger at full-term than at the mid-trimester stage. Expressed in HUVECS and at low levels in resting peripheral blood T-lymphocytes and quiescent fibroblasts. Also expressed in fetal liver and in the astrocytic process of primary astrocytic gliomas. Expressed in retinal endothelial cells and in the intestinal epithelial cell line C2BBe1.

It localises to the apical cell membrane. The protein localises to the cell membrane. The protein resides in the cell junction. Its subcellular location is the lysosome membrane. It is found in the melanosome. It localises to the basolateral cell membrane. In terms of biological role, acts as a chaperone that facilitates biogenesis and trafficking of functional transporters heterodimers to the plasma membrane. Forms heterodimer with SLC7 family transporters (SLC7A5, SLC7A6, SLC7A7, SLC7A8, SLC7A10 and SLC7A11), a group of amino-acid antiporters. Heterodimers function as amino acids exchangers, the specificity of the substrate depending on the SLC7A subunit. Heterodimers SLC3A2/SLC7A6 or SLC3A2/SLC7A7 mediate the uptake of dibasic amino acids. Heterodimer SLC3A2/SLC7A11 functions as an antiporter by mediating the exchange of extracellular anionic L-cystine and intracellular L-glutamate across the cellular plasma membrane. SLC3A2/SLC7A10 translocates small neutral L- and D-amino acids across the plasma membrane. SLC3A2/SLC75 or SLC3A2/SLC7A8 translocates neutral amino acids with broad specificity, thyroid hormones and L-DOPA. SLC3A2 is essential for plasma membrane localization, stability, and the transport activity of SLC7A5 and SLC7A8. When associated with LAPTM4B, the heterodimer SLC7A5 is recruited to lysosomes to promote leucine uptake into these organelles, and thereby mediates mTORC1 activation. Modulates integrin-related signaling and is essential for integrin-dependent cell spreading, migration and tumor progression. (Microbial infection) In case of hepatitis C virus/HCV infection, the complex formed by SLC3A2 and SLC7A5/LAT1 plays a role in HCV propagation by facilitating viral entry into host cell and increasing L-leucine uptake-mediated mTORC1 signaling activation, thereby contributing to HCV-mediated pathogenesis. Functionally, (Microbial infection) Acts as a receptor for malaria parasite Plasmodium vivax (Thai isolate) in immature red blood cells. The sequence is that of Amino acid transporter heavy chain SLC3A2 from Homo sapiens (Human).